A 347-amino-acid chain; its full sequence is D-fructose 1,6-bisphosphatase class 2/sedoheptulose 1,7-bisphosphatase (347 aa).

4 residues coordinate Mn(2+): Asp33, Glu57, Asp97, and Glu100. Substrate contacts are provided by residues 100–102 (EGT), Tyr131, 176–178 (RKR), and 198–200 (DGD). Residue Glu225 participates in Mn(2+) binding.

This sequence belongs to the FBPase class 2 family. As to quaternary structure, homotetramer. Mn(2+) is required as a cofactor.

The enzyme catalyses beta-D-fructose 1,6-bisphosphate + H2O = beta-D-fructose 6-phosphate + phosphate. The catalysed reaction is D-sedoheptulose 1,7-bisphosphate + H2O = D-sedoheptulose 7-phosphate + phosphate. It participates in carbohydrate biosynthesis; Calvin cycle. Catalyzes the hydrolysis of fructose 1,6-bisphosphate (Fru 1,6-P2) and sedoheptulose 1,7-bisphosphate (Sed 1,7-P2) to fructose 6-phosphate and sedoheptulose 7-phosphate, respectively. In Synechococcus sp. (strain JA-2-3B'a(2-13)) (Cyanobacteria bacterium Yellowstone B-Prime), this protein is D-fructose 1,6-bisphosphatase class 2/sedoheptulose 1,7-bisphosphatase.